The sequence spans 175 residues: Peptide deformylase (175 aa).

Cysteine 99 and histidine 141 together coordinate Fe cation. The active site involves glutamate 142. Histidine 145 contacts Fe cation.

This sequence belongs to the polypeptide deformylase family. The cofactor is Fe(2+).

The catalysed reaction is N-terminal N-formyl-L-methionyl-[peptide] + H2O = N-terminal L-methionyl-[peptide] + formate. In terms of biological role, removes the formyl group from the N-terminal Met of newly synthesized proteins. Requires at least a dipeptide for an efficient rate of reaction. N-terminal L-methionine is a prerequisite for activity but the enzyme has broad specificity at other positions. The polypeptide is Peptide deformylase (Rickettsia canadensis (strain McKiel)).